Here is a 1072-residue protein sequence, read N- to C-terminus: 5'-3' exoribonuclease 2 (1072 aa).

Residues 118–144 (RRFRAAREAMEKEEDKQKFVELLKKQN) are a coiled coil. Residues 269–286 (RLCKICGQKGHDAMNCKG) form a CCHC-type zinc finger. Over residues 414 to 435 (KETEDRREAGFKRRKLADEARQ) the composition is skewed to basic and acidic residues. Disordered regions lie at residues 414 to 459 (KETE…GFSF), 509 to 577 (QGTS…AEPT), 865 to 911 (ASRS…GGGG), and 943 to 1072 (GGGY…RGYR). Over residues 518 to 543 (AESTETPAETAAAAPATEEQAAPPAA) the composition is skewed to low complexity. A compositionally biased stretch (gly residues) spans 892–911 (GPGGGQQGGRGRGGYQGGGG). Residues 955–967 (GPPPGWQPPPPPG) are compositionally biased toward pro residues. 3 stretches are compositionally biased toward gly residues: residues 983–1000 (AYGG…GSSR), 1025–1036 (YGQGGSRGGYQG), and 1056–1072 (GYRG…RGYR).

This sequence belongs to the 5'-3' exonuclease family. XRN2/RAT1 subfamily. Interacts with rai1; the interaction is direct, stabilizes exr-1 protein structure and may stimulate its exoribonuclease activity. The interaction also stimulates rai1 pyrophosphohydrolase activity, probably by recruiting it to mRNA substrates.

The protein localises to the nucleus. In terms of biological role, possesses 5'-&gt;3' exoribonuclease activity. Required for the processing of nuclear mRNA and rRNA precursors. May promote the termination of transcription by RNA polymerase II. Essential for vegetative cell growth and chromosome segregation. This is 5'-3' exoribonuclease 2 (exr-1) from Neurospora crassa (strain ATCC 24698 / 74-OR23-1A / CBS 708.71 / DSM 1257 / FGSC 987).